The sequence spans 140 residues: Large ribosomal subunit protein uL11 (140 aa).

Belongs to the universal ribosomal protein uL11 family. As to quaternary structure, part of the ribosomal stalk of the 50S ribosomal subunit. Interacts with L10 and the large rRNA to form the base of the stalk. L10 forms an elongated spine to which L12 dimers bind in a sequential fashion forming a multimeric L10(L12)X complex. In terms of processing, one or more lysine residues are methylated.

Its function is as follows. Forms part of the ribosomal stalk which helps the ribosome interact with GTP-bound translation factors. In Staphylococcus saprophyticus subsp. saprophyticus (strain ATCC 15305 / DSM 20229 / NCIMB 8711 / NCTC 7292 / S-41), this protein is Large ribosomal subunit protein uL11.